The chain runs to 310 residues: Alpha/beta hydrolase domain-containing protein 17A (310 aa).

A disordered region spans residues 38-61; it reads VPEPEPGPGGAGAAPSGPLRTSAA. Active-site charge relay system residues include Ser-190, Asp-255, and His-284. The residue at position 307 (Ser-307) is a Phosphoserine.

It belongs to the AB hydrolase superfamily. ABHD17 family. Post-translationally, palmitoylated on cysteine residues located in a cysteine cluster at the N-terminus which promotes membrane localization. Palmitoylation is required for post-synaptic localization and for depalmitoylating activity towards DLG4/PSD95. As to expression, expressed in brain (at protein level). Expressed in hippocampal neurons.

It localises to the cell membrane. The protein localises to the recycling endosome membrane. It is found in the cell projection. Its subcellular location is the dendritic spine. The protein resides in the postsynaptic density membrane. The catalysed reaction is S-hexadecanoyl-L-cysteinyl-[protein] + H2O = L-cysteinyl-[protein] + hexadecanoate + H(+). Hydrolyzes fatty acids from S-acylated cysteine residues in proteins. Has depalmitoylating activity towards NRAS. Has depalmitoylating activity towards DLG4/PSD95. May have depalmitoylating activity towards MAP6. In Rattus norvegicus (Rat), this protein is Alpha/beta hydrolase domain-containing protein 17A.